The following is a 94-amino-acid chain: Cell division topological specificity factor (94 aa).

It belongs to the MinE family.

Prevents the cell division inhibition by proteins MinC and MinD at internal division sites while permitting inhibition at polar sites. This ensures cell division at the proper site by restricting the formation of a division septum at the midpoint of the long axis of the cell. This chain is Cell division topological specificity factor, found in Clostridioides difficile (strain 630) (Peptoclostridium difficile).